A 196-amino-acid polypeptide reads, in one-letter code: Major capsid protein (196 aa).

The tract at residues 27–55 is disordered; the sequence is TAPVRPQRKRRQRGRNNKPRGGNGFARRS. Residues 32–44 are compositionally biased toward basic residues; sequence PQRKRRQRGRNNK.

Belongs to the luteoviruses capsid protein family.

Its subcellular location is the virion. Major capsid protein. The chain is Major capsid protein from Bean leafroll virus (BLRV).